Consider the following 1172-residue polypeptide: Lysylphosphatidylglycerol biosynthesis bifunctional protein LysX (1172 aa).

A disordered region spans residues 1–34 (MGLHLTVPGLRRDGRGVQSNSHDTSSKTTADISR). The tract at residues 1-663 (MGLHLTVPGL…LLHHDGSAPD (663 aa)) is phosphatidylglycerol lysyltransferase. The span at 17–31 (VQSNSHDTSSKTTAD) shows a compositional bias: polar residues. A run of 7 helical transmembrane segments spans residues 80–100 (VPAAAGWTVGVIATLSLLASV), 122–142 (FPDTNFAWSFVLALLAAALTA), 146–166 (IAWLVLLANMVLAAVVNAAEI), 177–197 (FGENLGFAVHVVAIVVLVLGY), 214–234 (AVWLAGAVVGIVASWGLVELF), 272–292 (AIFGLFGAFALIGAAIVLFLS), and 612–632 (VIPRVGVASVIAEGFLVLPFS). The lysine--tRNA ligase stretch occupies residues 664-1172 (VSGLRQVGLT…TLPFPLAKPH (509 aa)). The segment at residues 726 to 804 (VSVSGRIMRI…SLIVSGWRLI (79 aa)) is a DNA-binding region (OB). Residues Asp1084 and Glu1091 each coordinate Mg(2+).

It in the N-terminal section; belongs to the LPG synthetase family. In the C-terminal section; belongs to the class-II aminoacyl-tRNA synthetase family. Mg(2+) is required as a cofactor.

It localises to the cell membrane. It carries out the reaction tRNA(Lys) + L-lysine + ATP = L-lysyl-tRNA(Lys) + AMP + diphosphate. The enzyme catalyses L-lysyl-tRNA(Lys) + a 1,2-diacyl-sn-glycero-3-phospho-(1'-sn-glycerol) = a 1,2-diacyl-sn-glycero-3-phospho-1'-(3'-O-L-lysyl)-sn-glycerol + tRNA(Lys). In terms of biological role, catalyzes the production of L-lysyl-tRNA(Lys)transfer and the transfer of a lysyl group from L-lysyl-tRNA(Lys) to membrane-bound phosphatidylglycerol (PG), which produces lysylphosphatidylglycerol (LPG), one of the components of the bacterial membrane with a positive net charge. LPG synthesis contributes to the resistance to cationic antimicrobial peptides (CAMPs) and likely protects M.tuberculosis against the CAMPs produced by competiting microorganisms (bacteriocins). In fact, the modification of anionic phosphatidylglycerol with positively charged L-lysine results in repulsion of the peptides. The protein is Lysylphosphatidylglycerol biosynthesis bifunctional protein LysX (lysX) of Mycobacterium tuberculosis (strain F11).